A 701-amino-acid polypeptide reads, in one-letter code: Elongation factor G (701 aa).

Residues 8-290 (TQYRNIGISA…AIIEYLPSPK (283 aa)) enclose the tr-type G domain. GTP is bound by residues 17–24 (AHIDAGKT), 88–92 (DTPGH), and 142–145 (NKMD).

This sequence belongs to the TRAFAC class translation factor GTPase superfamily. Classic translation factor GTPase family. EF-G/EF-2 subfamily.

It localises to the cytoplasm. In terms of biological role, catalyzes the GTP-dependent ribosomal translocation step during translation elongation. During this step, the ribosome changes from the pre-translocational (PRE) to the post-translocational (POST) state as the newly formed A-site-bound peptidyl-tRNA and P-site-bound deacylated tRNA move to the P and E sites, respectively. Catalyzes the coordinated movement of the two tRNA molecules, the mRNA and conformational changes in the ribosome. This is Elongation factor G from Buchnera aphidicola subsp. Cinara cedri (strain Cc).